The following is a 208-amino-acid chain: Non-specific lipid transfer protein GPI-anchored 4 (208 aa).

The N-terminal stretch at 1–25 (MKQSLLLSFVLLLLSSSSLVTPIHA) is a signal peptide. N-linked (GlcNAc...) asparagine glycans are attached at residues Asn-27, Asn-67, and Asn-105. 4 disulfide bridges follow: Cys-48-Cys-91, Cys-58-Cys-75, Cys-76-Cys-116, and Cys-89-Cys-125. Residues 136–181 (GASPVSPSAGAPTTSPSAAKSPETSATSPSSDETPSMTAPSPSSSG) form a disordered region. Ser-179 carries GPI-anchor amidated serine lipidation. A propeptide spans 180–208 (SGTNILSVPALTIVFVIVSSVAYISAFSN) (removed in mature form).

Belongs to the plant LTP family. As to expression, confined to the anthers and stamen of the inflorescence, especially in pollen.

It localises to the cell membrane. In terms of biological role, lipid transfer protein involved in seed and ovule maturation and development, probably by regulating the fatty acids homeostasis during suberin and sporopollenin biosynthesis or deposition. The sequence is that of Non-specific lipid transfer protein GPI-anchored 4 from Arabidopsis thaliana (Mouse-ear cress).